The sequence spans 374 residues: tRNA-specific 2-thiouridylase MnmA (374 aa).

Residues 8–15 and Met34 contribute to the ATP site; that span reads GLSGGVDS. The segment at 104–106 is interaction with target base in tRNA; that stretch reads NPD. Residue Cys109 is the Nucleophile of the active site. Residues Cys109 and Cys208 are joined by a disulfide bond. Residue Gly134 coordinates ATP. The interval 158-160 is interaction with tRNA; sequence KDQ. The active-site Cysteine persulfide intermediate is Cys208. The tract at residues 321–322 is interaction with tRNA; sequence RY.

The protein belongs to the MnmA/TRMU family.

Its subcellular location is the cytoplasm. The enzyme catalyses S-sulfanyl-L-cysteinyl-[protein] + uridine(34) in tRNA + AH2 + ATP = 2-thiouridine(34) in tRNA + L-cysteinyl-[protein] + A + AMP + diphosphate + H(+). Functionally, catalyzes the 2-thiolation of uridine at the wobble position (U34) of tRNA, leading to the formation of s(2)U34. This Mesoplasma florum (strain ATCC 33453 / NBRC 100688 / NCTC 11704 / L1) (Acholeplasma florum) protein is tRNA-specific 2-thiouridylase MnmA.